The primary structure comprises 389 residues: Very-long-chain 3-oxoacyl-CoA reductase (389 aa).

Residues 34–54 (IAVFLLAIGLFHVALKVVSYV) form a helical membrane-spanning segment. The NADP(+) site is built by V80, D134, N162, Y239, K243, V272, and S274. Y239 (proton donor) is an active-site residue. The active-site Lowers pKa of active site Tyr is K243. Positions 359–389 (QAAGGVADPKNTTAAREGYATESLKNETLKH) are disordered.

It belongs to the short-chain dehydrogenases/reductases (SDR) family.

The protein resides in the endoplasmic reticulum membrane. The catalysed reaction is a very-long-chain (3R)-3-hydroxyacyl-CoA + NADP(+) = a very-long-chain 3-oxoacyl-CoA + NADPH + H(+). It functions in the pathway lipid metabolism; fatty acid biosynthesis. Functionally, component of the microsomal membrane bound fatty acid elongation system, which produces the 26-carbon very long-chain fatty acids (VLCFA) from palmitate. Catalyzes the reduction of the 3-ketoacyl-CoA intermediate that is formed in each cycle of fatty acid elongation. VLCFAs serve as precursors for ceramide and sphingolipids. In Yarrowia lipolytica (strain CLIB 122 / E 150) (Yeast), this protein is Very-long-chain 3-oxoacyl-CoA reductase.